A 342-amino-acid polypeptide reads, in one-letter code: Phosphoribosylformylglycinamidine cyclo-ligase (342 aa).

The protein belongs to the AIR synthase family.

Its subcellular location is the cytoplasm. It carries out the reaction 2-formamido-N(1)-(5-O-phospho-beta-D-ribosyl)acetamidine + ATP = 5-amino-1-(5-phospho-beta-D-ribosyl)imidazole + ADP + phosphate + H(+). The protein operates within purine metabolism; IMP biosynthesis via de novo pathway; 5-amino-1-(5-phospho-D-ribosyl)imidazole from N(2)-formyl-N(1)-(5-phospho-D-ribosyl)glycinamide: step 2/2. The chain is Phosphoribosylformylglycinamidine cyclo-ligase from Latilactobacillus sakei subsp. sakei (strain 23K) (Lactobacillus sakei subsp. sakei).